A 123-amino-acid polypeptide reads, in one-letter code: Ig heavy chain V region HPCM6 (123 aa).

One can recognise an Ig-like domain in the interval 1–114 (EVKLVESGGG…YPHWYFDVWG (114 aa)).

The polypeptide is Ig heavy chain V region HPCM6 (Mus musculus (Mouse)).